The primary structure comprises 766 residues: AMP deaminase 3 (766 aa).

Serine 85 and serine 107 each carry phosphoserine. Residues 89 to 114 are disordered; the sequence is QMPTQQDWKGPPTASPAMSPATPLVP. The segment covering 99 to 110 has biased composition (low complexity); it reads PPTASPAMSPAT. Zn(2+) contacts are provided by histidine 316 and histidine 318. Residues histidine 318 and 387-392 each bind substrate; that span reads KFNSKY. Residue histidine 585 coordinates Zn(2+). Residue glutamate 588 coordinates substrate. The Proton acceptor role is filled by histidine 607. Aspartate 662 contributes to the Zn(2+) binding site. 663–666 is a substrate binding site; sequence DPMQ.

The protein belongs to the metallo-dependent hydrolases superfamily. Adenosine and AMP deaminases family. As to quaternary structure, homotetramer. The cofactor is Zn(2+). In terms of tissue distribution, found in heart, lung brain, spleen, kidney and to a lesser extent in liver.

The enzyme catalyses AMP + H2O + H(+) = IMP + NH4(+). The protein operates within purine metabolism; IMP biosynthesis via salvage pathway; IMP from AMP: step 1/1. In terms of biological role, AMP deaminase plays a critical role in energy metabolism. In Mus musculus (Mouse), this protein is AMP deaminase 3.